A 605-amino-acid chain; its full sequence is Elongation factor 4 (605 aa).

The tr-type G domain maps to 4 to 186 (SATRNFCIIA…AIVARVPAPK (183 aa)). GTP contacts are provided by residues 16–21 (DHGKST) and 133–136 (NKID).

The protein belongs to the TRAFAC class translation factor GTPase superfamily. Classic translation factor GTPase family. LepA subfamily.

It is found in the cell membrane. The catalysed reaction is GTP + H2O = GDP + phosphate + H(+). In terms of biological role, required for accurate and efficient protein synthesis under certain stress conditions. May act as a fidelity factor of the translation reaction, by catalyzing a one-codon backward translocation of tRNAs on improperly translocated ribosomes. Back-translocation proceeds from a post-translocation (POST) complex to a pre-translocation (PRE) complex, thus giving elongation factor G a second chance to translocate the tRNAs correctly. Binds to ribosomes in a GTP-dependent manner. The protein is Elongation factor 4 of Dehalococcoides mccartyi (strain ATCC BAA-2266 / KCTC 15142 / 195) (Dehalococcoides ethenogenes (strain 195)).